The sequence spans 318 residues: NADH-ubiquinone oxidoreductase chain 1 (318 aa).

Helical transmembrane passes span 2–22, 68–88, 100–120, 146–166, 171–191, 213–233, 253–273, and 285–305; these read PMTN…FLML, ITLY…LWTP, LGLL…LWSG, LAII…STLV, HLWL…STLA, IEYA…NIIM, ELYT…FLWI, and LMHL…MWYI.

Belongs to the complex I subunit 1 family. Core subunit of respiratory chain NADH dehydrogenase (Complex I) which is composed of 45 different subunits.

It localises to the mitochondrion inner membrane. It catalyses the reaction a ubiquinone + NADH + 5 H(+)(in) = a ubiquinol + NAD(+) + 4 H(+)(out). Core subunit of the mitochondrial membrane respiratory chain NADH dehydrogenase (Complex I) which catalyzes electron transfer from NADH through the respiratory chain, using ubiquinone as an electron acceptor. Essential for the catalytic activity and assembly of complex I. In Pan troglodytes (Chimpanzee), this protein is NADH-ubiquinone oxidoreductase chain 1 (MT-ND1).